We begin with the raw amino-acid sequence, 253 residues long: RNA polymerase sigma factor SigI6 (253 aa).

A Polymerase core binding motif is present at residues 63 to 76; sequence EEYSVALLAFNEAI. The segment at residues 203 to 222 is a DNA-binding region (H-T-H motif); sequence TLELLKLAKVSRRTIERNKK.

The protein belongs to the sigma-70 factor family. SigI subfamily. Interacts with RsgI6.

The protein localises to the cytoplasm. With respect to regulation, negatively regulated by the anti-sigma-I factor RsgI6. Binding of the polysaccharide substrate to RsgI6 may lead to the release and activation of SigI6. Its function is as follows. Sigma factors are initiation factors that promote the attachment of RNA polymerase to specific initiation sites and are then released. This sigma factor is involved in regulation of cellulosomal genes via an external polysaccharide-sensing mechanism. Recognizes the predicted promoters associated with sigI6 itself, xyn11B, xyn10D, xyn10Z, xyn10Y, cel9V, cseP, sigI1, cipA, and rsgI5. This is RNA polymerase sigma factor SigI6 from Acetivibrio thermocellus (strain ATCC 27405 / DSM 1237 / JCM 9322 / NBRC 103400 / NCIMB 10682 / NRRL B-4536 / VPI 7372) (Clostridium thermocellum).